The sequence spans 544 residues: Methionine--tRNA ligase (544 aa).

The 'HIGH' region motif lies at Pro10–His20. Zn(2+)-binding residues include Cys141, Cys144, Cys153, and Cys156. Positions Lys329–Ser333 match the 'KMSKS' region motif. An ATP-binding site is contributed by Thr332.

It belongs to the class-I aminoacyl-tRNA synthetase family. MetG type 1 subfamily. In terms of assembly, monomer. The cofactor is Zn(2+).

The protein localises to the cytoplasm. The catalysed reaction is tRNA(Met) + L-methionine + ATP = L-methionyl-tRNA(Met) + AMP + diphosphate. In terms of biological role, is required not only for elongation of protein synthesis but also for the initiation of all mRNA translation through initiator tRNA(fMet) aminoacylation. The sequence is that of Methionine--tRNA ligase from Bacillus cereus (strain B4264).